Here is an 853-residue protein sequence, read N- to C-terminus: DNA mismatch repair protein MutS (853 aa).

616–623 serves as a coordination point for ATP; sequence GPNMGGKS.

The protein belongs to the DNA mismatch repair MutS family.

Its function is as follows. This protein is involved in the repair of mismatches in DNA. It is possible that it carries out the mismatch recognition step. This protein has a weak ATPase activity. The sequence is that of DNA mismatch repair protein MutS from Erwinia tasmaniensis (strain DSM 17950 / CFBP 7177 / CIP 109463 / NCPPB 4357 / Et1/99).